Consider the following 541-residue polypeptide: CTP synthase (541 aa).

The segment at 1 to 271 (MVGKLNPTRF…DTQILKHFDV (271 aa)) is amidoligase domain. S19 lines the CTP pocket. S19 is a UTP binding site. Residues 20–25 (SLGKGL) and D77 each bind ATP. 2 residues coordinate Mg(2+): D77 and E145. Residues 152–154 (DIE), 192–197 (KTKPTQ), and K228 each bind CTP. Residues 192–197 (KTKPTQ) and K228 contribute to the UTP site. The region spanning 296–537 (VIAIVGKYVT…VTSTLQVKKA (242 aa)) is the Glutamine amidotransferase type-1 domain. An L-glutamine-binding site is contributed by G355. The Nucleophile; for glutamine hydrolysis role is filled by C382. L-glutamine contacts are provided by residues 383–386 (LGMQ), E406, and R465. Residues H510 and E512 contribute to the active site.

It belongs to the CTP synthase family. In terms of assembly, homotetramer.

The catalysed reaction is UTP + L-glutamine + ATP + H2O = CTP + L-glutamate + ADP + phosphate + 2 H(+). It carries out the reaction L-glutamine + H2O = L-glutamate + NH4(+). It catalyses the reaction UTP + NH4(+) + ATP = CTP + ADP + phosphate + 2 H(+). Its pathway is pyrimidine metabolism; CTP biosynthesis via de novo pathway; CTP from UDP: step 2/2. Its activity is regulated as follows. Allosterically activated by GTP, when glutamine is the substrate; GTP has no effect on the reaction when ammonia is the substrate. The allosteric effector GTP functions by stabilizing the protein conformation that binds the tetrahedral intermediate(s) formed during glutamine hydrolysis. Inhibited by the product CTP, via allosteric rather than competitive inhibition. Catalyzes the ATP-dependent amination of UTP to CTP with either L-glutamine or ammonia as the source of nitrogen. Regulates intracellular CTP levels through interactions with the four ribonucleotide triphosphates. This chain is CTP synthase, found in Anaplasma phagocytophilum (strain HZ).